The following is a 467-amino-acid chain: Phosphomethylpyrimidine synthase (467 aa).

Residues Asn-80, Met-109, Tyr-139, His-175, 195-197 (SRG), 236-239 (DSLR), and Glu-275 each bind substrate. His-279 contacts Zn(2+). Tyr-302 contributes to the substrate binding site. A Zn(2+)-binding site is contributed by His-343. Residues Cys-423, Cys-426, and Cys-431 each coordinate [4Fe-4S] cluster.

It belongs to the ThiC family. The cofactor is [4Fe-4S] cluster.

The catalysed reaction is 5-amino-1-(5-phospho-beta-D-ribosyl)imidazole + S-adenosyl-L-methionine = 4-amino-2-methyl-5-(phosphooxymethyl)pyrimidine + CO + 5'-deoxyadenosine + formate + L-methionine + 3 H(+). It participates in cofactor biosynthesis; thiamine diphosphate biosynthesis. Functionally, catalyzes the synthesis of the hydroxymethylpyrimidine phosphate (HMP-P) moiety of thiamine from aminoimidazole ribotide (AIR) in a radical S-adenosyl-L-methionine (SAM)-dependent reaction. The polypeptide is Phosphomethylpyrimidine synthase (Synechococcus sp. (strain WH7803)).